The sequence spans 634 residues: Chaperone protein DnaK (634 aa).

The residue at position 193 (Thr193) is a Phosphothreonine; by autocatalysis. A disordered region spans residues Gly597–Lys634. A compositionally biased stretch (low complexity) spans Asn600–Asn613. A compositionally biased stretch (basic and acidic residues) spans Glu616 to Lys634.

Belongs to the heat shock protein 70 family.

Functionally, acts as a chaperone. This chain is Chaperone protein DnaK, found in Ehrlichia canis (strain Jake).